The primary structure comprises 393 residues: Cholinephosphotransferase 1 (393 aa).

Residues 1–40 (MGFFIPQSSLGNLKLYKYQSDDRSFLSNHVLRPFWRKFAT) lie on the Lumenal side of the membrane. A helical transmembrane segment spans residues 41–61 (IFPLWMAPNLVTLLGFCFIIF). Topologically, residues 62 to 172 (NVLTTLYYDP…YHTHKLYLAE (111 aa)) are cytoplasmic. Residues 173 to 193 (FCGPVEGIIVLCISFIAVGIY) form a helical membrane-spanning segment. Over 194-210 (GPQTIWHTKVAQFSWQD) the chain is Lumenal. The chain crosses the membrane as a helical span at residues 211–231 (FVFDVETVHLMYAFCTGALIF). Topologically, residues 232-263 (NIVTAHTNVVRYYESQSTKSATPSKTAENISK) are cytoplasmic. The helical transmembrane segment at 264–284 (AVNGLLPFFAYFSSIFTLVLI) threads the bilayer. Position 285 (glutamine 285) is a topological domain, lumenal. The chain crosses the membrane as a helical span at residues 286-306 (PSFISLALILSIGFSVAFVVG). At 307 to 320 (RMIIAHLTMQPFPM) the chain is on the cytoplasmic side. The helical transmembrane segment at 321 to 341 (VNFPFLIPTIQLVLYAFMVYV) threads the bilayer. At 342–348 (LDYQKGS) the chain is on the lumenal side. Residues 349-369 (IVSALVWMGLGLTLAIHGMFI) traverse the membrane as a helical segment. Residues 370–393 (NDIIYDITTFLDIYALSIKHPKEI) lie on the Cytoplasmic side of the membrane.

The protein belongs to the CDP-alcohol phosphatidyltransferase class-I family. Mg(2+) is required as a cofactor.

Its subcellular location is the microsome membrane. It is found in the endoplasmic reticulum membrane. The protein localises to the mitochondrion outer membrane. It carries out the reaction CDP-choline + a 1,2-diacyl-sn-glycerol = a 1,2-diacyl-sn-glycero-3-phosphocholine + CMP + H(+). It catalyses the reaction CDP-N,N-dimethylethanolamine + a 1,2-diacyl-sn-glycerol = a 1,2-diacyl-sn-glycero-3-phospho-N,N-dimethylethanolamine + CMP + H(+). It participates in phospholipid metabolism; phosphatidylcholine biosynthesis; phosphatidylcholine from phosphocholine: step 2/2. Requires a divalent cation activator, and is inhibited by CMP. Activated by phospholipids, especially phosphatidylcholine. Its function is as follows. Catalyzes the final step in the CDP-choline route leading to phosphatidylcholin (PC). Preferentially uses CDP-monomethylethanolamine as aminoalcohol substrate. Shows highest activity toward di- and mono-unsaturated diacylglycerol species as lipid substrates. The CDP-choline pathway only contributes to net PC synthesis if exogenous choline is present. In its absence, this pathway recycles choline from PC turnover and may contribute to maintaining the proper PC species composition. This is Cholinephosphotransferase 1 (CPT1) from Saccharomyces cerevisiae (strain ATCC 204508 / S288c) (Baker's yeast).